The following is a 37-amino-acid chain: Cytochrome b6-f complex subunit 5 (37 aa).

A helical transmembrane segment spans residues 5-25 (LLSGIVLGLVPITITGLLVTA).

The protein belongs to the PetG family. As to quaternary structure, the 4 large subunits of the cytochrome b6-f complex are cytochrome b6, subunit IV (17 kDa polypeptide, PetD), cytochrome f and the Rieske protein, while the 4 small subunits are PetG, PetL, PetM and PetN. The complex functions as a dimer.

It localises to the plastid. Its subcellular location is the chloroplast thylakoid membrane. Functionally, component of the cytochrome b6-f complex, which mediates electron transfer between photosystem II (PSII) and photosystem I (PSI), cyclic electron flow around PSI, and state transitions. PetG is required for either the stability or assembly of the cytochrome b6-f complex. This is Cytochrome b6-f complex subunit 5 from Tupiella akineta (Green alga).